The chain runs to 417 residues: XO lethal protein 1 (417 aa).

The segment at 373 to 417 is disordered; it reads VSPGETSSEGISDEHHYEEYDEDDIMEEEEAPSARQDDTYDEDEE. Residues 391–403 are compositionally biased toward acidic residues; it reads EYDEDDIMEEEEA.

The protein belongs to the GHMP kinase family. Xol-1 subfamily.

The protein resides in the nucleus. Functionally, sex-determining factor that is required for sexual differentiation and X chromosome dosage compensation to promote male development. High expression during gastrulation triggers male development, while low expression at that time triggers hermaphrodite development. Although related to GHMP kinase, its mode of action remains unclear. This chain is XO lethal protein 1, found in Caenorhabditis elegans.